Consider the following 263-residue polypeptide: Eukaryotic translation initiation factor 3 subunit J-B (263 aa).

The span at methionine 1–alanine 13 shows a compositional bias: low complexity. The interval methionine 1–proline 115 is disordered. An N-acetylalanine modification is found at alanine 2. A sufficient for interaction with EIF3B region spans residues alanine 6–valine 74. Serine 16, serine 18, and serine 25 each carry phosphoserine. A compositionally biased stretch (acidic residues) spans glutamate 45–glutamate 66. Residues glutamate 67–lysine 111 are compositionally biased toward basic and acidic residues. A coiled-coil region spans residues lysine 75–threonine 140. Lysine 111 participates in a covalent cross-link: Glycyl lysine isopeptide (Lys-Gly) (interchain with G-Cter in SUMO2). Residue threonine 114 is modified to Phosphothreonine. Phosphoserine is present on serine 132. Residues tyrosine 248–methionine 263 are promotes stable association with the 40S ribosome. Tyrosine 259 is subject to Phosphotyrosine.

Belongs to the eIF-3 subunit J family. As to quaternary structure, component of the eukaryotic translation initiation factor 3 (eIF-3) complex, which is composed of 13 subunits: EIF3A, EIF3B, EIF3C, EIF3D, EIF3E, EIF3F, EIF3G, EIF3H, EIF3I, EIF3J, EIF3K, EIF3L and EIF3M. The eIF-3 complex appears to include 3 stable modules: module A is composed of EIF3A, EIF3B, EIF3G and EIF3I; module B is composed of EIF3F, EIF3H, and EIF3M; and module C is composed of EIF3C, EIF3D, EIF3E, EIF3K and EIF3L. EIF3C of module C binds EIF3B of module A and EIF3H of module B, thereby linking the three modules. EIF3J is a labile subunit that binds to the eIF-3 complex via EIF3B. The eIF-3 complex interacts with RPS6KB1 under conditions of nutrient depletion. Mitogenic stimulation leads to binding and activation of a complex composed of MTOR and RPTOR, leading to phosphorylation and release of RPS6KB1 and binding of EIF4B to eIF-3. In terms of processing, phosphorylated. Phosphorylation is enhanced upon serum stimulation.

It is found in the cytoplasm. Its function is as follows. Component of the eukaryotic translation initiation factor 3 (eIF-3) complex, which is required for several steps in the initiation of protein synthesis. The eIF-3 complex associates with the 40S ribosome and facilitates the recruitment of eIF-1, eIF-1A, eIF-2:GTP:methionyl-tRNAi and eIF-5 to form the 43S pre-initiation complex (43S PIC). The eIF-3 complex stimulates mRNA recruitment to the 43S PIC and scanning of the mRNA for AUG recognition. The eIF-3 complex is also required for disassembly and recycling of post-termination ribosomal complexes and subsequently prevents premature joining of the 40S and 60S ribosomal subunits prior to initiation. The eIF-3 complex specifically targets and initiates translation of a subset of mRNAs involved in cell proliferation, including cell cycling, differentiation and apoptosis, and uses different modes of RNA stem-loop binding to exert either translational activation or repression. This subunit binds directly within the mRNA entry channel of the 40S ribosome to the aminoacyl (A) site. It may regulate the interaction between the 43S PIC and mRNA. This is Eukaryotic translation initiation factor 3 subunit J-B (Eif3j2) from Mus musculus (Mouse).